Consider the following 128-residue polypeptide: Large ribosomal subunit protein bL17 (128 aa).

This sequence belongs to the bacterial ribosomal protein bL17 family. Part of the 50S ribosomal subunit. Contacts protein L32.

The polypeptide is Large ribosomal subunit protein bL17 (Streptococcus thermophilus (strain ATCC BAA-250 / LMG 18311)).